Reading from the N-terminus, the 708-residue chain is uncharacterized protein (708 aa).

Disordered regions lie at residues 1–79 (MHAR…RRSS), 119–301 (AGEF…IHQR), 349–390 (YLSH…GDEN), and 410–461 (SNSF…KRQR). Positions 65 to 74 (LPPPLPPPPV) are enriched in pro residues. A compositionally biased stretch (polar residues) spans 238-249 (DEAQSKTGSSSA). The span at 260–274 (SKVSEGSSSLSAGSG) shows a compositional bias: low complexity. Residues 410–419 (SNSFPSSILR) show a composition bias toward polar residues. Over residues 442-461 (VGEKRPGEGSDLEEGSKRQR) the composition is skewed to basic and acidic residues.

This is an uncharacterized protein from Arabidopsis thaliana (Mouse-ear cress).